The chain runs to 340 residues: Beta-D-galactofuranosidase xynD (340 aa).

Positions Met1–Ser24 are cleaved as a signal peptide. Asp51 acts as the Proton acceptor in catalysis. Residues Asn96 and Asn165 are each glycosylated (N-linked (GlcNAc...) asparagine). The active-site Proton donor is Glu222. 2 N-linked (GlcNAc...) asparagine glycosylation sites follow: Asn302 and Asn328.

The protein belongs to the glycosyl hydrolase 43 family.

It localises to the secreted. Its pathway is glycan degradation. In terms of biological role, glycoside hydrolase family 43 beta-D-galactofuranosidase involved in the degradation of beta-galactofuranoside (Galf)-containing glycans such as galactomannan or O-glycans. Is not active on beta-1,5- or beta-1,6-linked beta-D-galactofuranose (Galf) residues. This chain is Beta-D-galactofuranosidase xynD, found in Aspergillus niger (strain ATCC MYA-4892 / CBS 513.88 / FGSC A1513).